The following is a 211-amino-acid chain: MAPSRNGMILNPHFHKDWQKRVRTWFNQPARKLRRRKARQAKARRIAPRPVAGPLRPIVRCPTVRYNTKVRAGRGFTLEELKAAGINKRVARTIGIAVDPRRRNRSTESLHVNVQRLKVYRSKLILFPRKVSAPKKGDSTEEEVKMATQLTGPVMPIKIVHKKEKARMITEEEKKFNAFANLRMARANARLFGIRAKRAKEAAEQDVEKKK.

It belongs to the eukaryotic ribosomal protein eL13 family. In terms of assembly, component of the 60S large ribosomal subunit (LSU).

Its subcellular location is the cytoplasm. Component of the ribosome, a large ribonucleoprotein complex responsible for the synthesis of proteins in the cell. The small ribosomal subunit (SSU) binds messenger RNAs (mRNAs) and translates the encoded message by selecting cognate aminoacyl-transfer RNA (tRNA) molecules. The large subunit (LSU) contains the ribosomal catalytic site termed the peptidyl transferase center (PTC), which catalyzes the formation of peptide bonds, thereby polymerizing the amino acids delivered by tRNAs into a polypeptide chain. The nascent polypeptides leave the ribosome through a tunnel in the LSU and interact with protein factors that function in enzymatic processing, targeting, and the membrane insertion of nascent chains at the exit of the ribosomal tunnel. As part of the LSU, it is probably required for its formation and the maturation of rRNAs. This chain is Large ribosomal subunit protein eL13 (rpl13), found in Ictalurus punctatus (Channel catfish).